The primary structure comprises 275 residues: Large ribosomal subunit protein uL2cz/uL2cy (275 aa).

Disordered stretches follow at residues 1–26 and 224–275; these read MAIH…VKSN and MNPV…RRTK. A compositionally biased stretch (polar residues) spans 7–26; it reads KTSTPSTRNGTVDSRQVKSN.

The protein belongs to the universal ribosomal protein uL2 family. In terms of assembly, part of the 50S ribosomal subunit.

It is found in the plastid. The protein resides in the chloroplast. The protein is Large ribosomal subunit protein uL2cz/uL2cy (rpl2-A) of Phaseolus angularis (Azuki bean).